A 198-amino-acid chain; its full sequence is Small ribosomal subunit protein uS7 (198 aa).

Belongs to the universal ribosomal protein uS7 family. As to quaternary structure, part of the 30S ribosomal subunit.

Its function is as follows. One of the primary rRNA binding proteins, it binds directly to 16S rRNA where it nucleates assembly of the head domain of the 30S subunit. Is located at the subunit interface close to the decoding center. The chain is Small ribosomal subunit protein uS7 from Nanoarchaeum equitans (strain Kin4-M).